The sequence spans 593 residues: Double-stranded RNA-binding protein 2 (593 aa).

DRBM domains follow at residues M1–K70 and I87–Q155. Residues L188–P197 show a composition bias toward polar residues. 3 disordered regions span residues L188 to A221, A357 to Q408, and V546 to I593. Positions S205–S219 are enriched in low complexity. Polar residues predominate over residues E378 to Q408. A compositionally biased stretch (low complexity) spans R572–S586.

Binds double-stranded RNA. The chain is Double-stranded RNA-binding protein 2 (DRB2) from Oryza sativa subsp. japonica (Rice).